The chain runs to 253 residues: MSAYPKFDVILKALNLSSVGVIITDPEQKNNPIIFVNTGFENITGYTKEEAIGSNCHFLQGDDTDKEEVAKIRHAINEKSTANVLLKNYRKNGTSFMNELTIEPIYDDNDHLYFVGIQKDVTTEHNYQLELEKSLWEIEKLSTPIVPIKENICVLPLIGSLTHDRFQHMSDYVSEYMDNGKEDYLIMDLSGLADFNEDAVMNLVKFHGFMKLTGVELIITGISPKFAMTLMRYQENLSSLTTYSTIKEALQFY.

Residues lysine 6 to lysine 79 enclose the PAS domain. S-4a-FMN cysteine is present on cysteine 56. Residues serine 80–lysine 133 enclose the PAC domain. The STAS domain maps to serine 142 to tyrosine 253.

FMN binds covalently to cysteine after exposure to blue light and this bond is spontaneously broken in the dark.

In terms of biological role, exhibits the same spectroscopical features and blue-light induced photochemistry as plants phototropins, with the reversible formation of a blue-shifted photoproduct, assigned to an FMN-cysteine thiol adduct. Positive regulator in the activation of the general stress transcription factor sigma-B. This chain is Blue-light photoreceptor, found in Listeria innocua serovar 6a (strain ATCC BAA-680 / CLIP 11262).